The sequence spans 201 residues: UPF0301 protein ROP_34500 (201 aa).

Belongs to the UPF0301 (AlgH) family.

In Rhodococcus opacus (strain B4), this protein is UPF0301 protein ROP_34500.